We begin with the raw amino-acid sequence, 637 residues long: MVSLDTEVVNDLKSKVNIADLISQYVALSRTGKNYIGLCPFHGEKTPSFNVNAEKGFYHCFGCGRSGDAIEFLKEYNQVGFVDAVKELADFAGVTLNISDDREEKNNPNAPLFEINNQAARLYNILLMSTELGERARKYLEERGITDDVIKRFNIGLAPEENDFIFKNLSNKFDEEIMAKSGLFHFSNNNVFDAFTNRIMFPITNEYGHTIGFSGRKWQENDDSKAKYINTSATTIFDKSYELWNLDKAKPTISKQHEVYLMEGFMDVIAAYKAGINNVVASMGTALTEKHIRRLKQMAKKFVLVYDGDSAGQNAIYKAIDLIGESAVQIVKVPEGLDPDEYSKNYGLKGLSALMETGRIQPIEFLIDYLRPENLANLQTQLDFIEQISPMIAKLPSITAQDAYIRKLVEILPDFEYNQVEQAVNLRRENMTITDHPVSNLDASSLTESFTDENDYSSLESVMPVDFEEAYYENNVKTQQTYRRSESAQVVQPSVQVPKLSRSEKAEEMLLHRMIYHSSVLKKFSQDENFRFVHKRYQDLFDKILLEAMVYEQIDESHLASELSDEERSLFYQIISLDLPDTASSQEIKDLVSIFSNEMEQIKFEELIQQLATAEKAGNKERVLELTLQIINQKKKL.

The CHC2-type zinc finger occupies 39 to 63 (CPFHGEKTPSFNVNAEKGFYHCFGC). A Toprim domain is found at 257–338 (HEVYLMEGFM…QIVKVPEGLD (82 aa)). Residues E263, D307, and D309 each coordinate Mg(2+).

It belongs to the DnaG primase family. In terms of assembly, monomer. Interacts with DnaB. The cofactor is Zn(2+). Mg(2+) serves as cofactor.

It carries out the reaction ssDNA + n NTP = ssDNA/pppN(pN)n-1 hybrid + (n-1) diphosphate.. In terms of biological role, RNA polymerase that catalyzes the synthesis of short RNA molecules used as primers for DNA polymerase during DNA replication. The chain is DNA primase from Lactococcus lactis subsp. lactis (strain IL1403) (Streptococcus lactis).